The primary structure comprises 243 residues: Chromosome partition protein MukE (243 aa).

Positions 214 to 243 (DSLALEKQADLNEVDDNDELEDELDDEEHA) are disordered. Acidic residues predominate over residues 225–243 (NEVDDNDELEDELDDEEHA).

It belongs to the MukE family. In terms of assembly, interacts, and probably forms a ternary complex, with MukF and MukB. The complex formation is stimulated by calcium or magnesium.

The protein localises to the cytoplasm. The protein resides in the nucleoid. In terms of biological role, involved in chromosome condensation, segregation and cell cycle progression. May participate in facilitating chromosome segregation by condensation DNA from both sides of a centrally located replisome during cell division. Probably acts via its interaction with MukB and MukF. The polypeptide is Chromosome partition protein MukE (Pasteurella multocida (strain Pm70)).